Consider the following 1690-residue polypeptide: Restin homolog (1690 aa).

Polar residues-rich tracts occupy residues 1-11 (MSDDTSASGGT) and 39-51 (NIPT…TGIP). Positions 1-105 (MSDDTSASGG…ESDDNLSSIN (105 aa)) are disordered. A phosphoserine mark is found at Ser64 and Ser67. The region spanning 143-185 (GDTHFAAGEWAGVVLDEPNGKNDGCVSGKRYFQCEPKRGIFSR) is the CAP-Gly 1 domain. The tract at residues 195 to 227 (AGAQTPTSPLAKSSPDRSRTVSPTASIRSSMLR) is disordered. A compositionally biased stretch (polar residues) spans 214–226 (TVSPTASIRSSML). A Phosphoserine modification is found at Ser216. The 43-residue stretch at 260–302 (GETQFAPGNWCGVELDEPSGKNDGTVDDIRYFECKPKYGVFVP) folds into the CAP-Gly 2 domain. Residues Ser309, Ser322, and Ser325 each carry the phosphoserine modification. Phosphothreonine is present on Thr327. Phosphoserine is present on Ser328. At Thr362 the chain carries Phosphothreonine. Coiled coils occupy residues 378–468 (QHVE…VSAT), 484–660 (GALQ…DMLR), 667–916 (EEKS…TKLK), 926–981 (LSSC…ELQA), 1001–1121 (ATGH…EAIQ), 1158–1549 (EADM…AQMN), and 1565–1600 (DIET…LETL). The disordered stretch occupies residues 843 to 905 (QQAAASGEEG…GSLEEEAKKS (63 aa)). The span at 865–885 (QLKSQAEETQSELKSTQSNLE) shows a compositional bias: polar residues. Disordered regions lie at residues 1031 to 1052 (QLQD…KEKS) and 1400 to 1419 (KLDE…NEIQ). Basic and acidic residues-rich tracts occupy residues 1040 to 1052 (TKLK…KEKS) and 1410 to 1419 (SQKKSHNEIQ). Residues 1635-1665 (TEDCPIQGSEDQDYSTPSSESNNNEKERKLP) are disordered. A Phosphothreonine modification is found at Thr1681. Ser1682 bears the Phosphoserine mark.

In terms of assembly, interacts with Lva. Specifically expressed at the tip of the furrow in cellularizing blastoderms. CLIP-190 and jar are coexpressed at several times in development and in a number of tissues, including embryonic axonal neuron processes and posterior pole.

It is found in the cytoplasm. It localises to the cytoskeleton. The protein localises to the golgi apparatus. The protein resides in the microtubule organizing center. Its subcellular location is the perinuclear region. Its function is as follows. Together CLIP-190 and jar may coordinate the interaction between the actin and microtubule cytoskeleton. May link endocytic vesicles to microtubules. May play a role in formation of furrows during cellularization. This Drosophila melanogaster (Fruit fly) protein is Restin homolog (CLIP-190).